The sequence spans 247 residues: ATP synthase subunit a 1 (247 aa).

6 helical membrane passes run 32–52 (YMLL…RALV), 82–102 (FFPL…VGII), 112–132 (IIVT…YGFY), 141–161 (LFVP…IEII), 181–201 (GHVT…LGFV), and 206–226 (ALLP…VAFL).

This sequence belongs to the ATPase A chain family. As to quaternary structure, F-type ATPases have 2 components, CF(1) - the catalytic core - and CF(0) - the membrane proton channel. CF(1) has five subunits: alpha(3), beta(3), gamma(1), delta(1), epsilon(1). CF(0) has four main subunits: a, b, b' and c.

It localises to the cell inner membrane. Functionally, key component of the proton channel; it plays a direct role in the translocation of protons across the membrane. This Bradyrhizobium sp. (strain BTAi1 / ATCC BAA-1182) protein is ATP synthase subunit a 1.